The primary structure comprises 534 residues: DM7 family protein GE17491 (534 aa).

The protein belongs to the DM7 family.

The sequence is that of DM7 family protein GE17491 from Drosophila yakuba (Fruit fly).